We begin with the raw amino-acid sequence, 131 residues long: Peptide methionine sulfoxide reductase MsrB (131 aa).

The 123-residue stretch at 8 to 130 (DAEWRAQLTD…NSVCLDLKRS (123 aa)) folds into the MsrB domain. Zn(2+)-binding residues include cysteine 47, cysteine 50, cysteine 96, and cysteine 99. Catalysis depends on cysteine 119, which acts as the Nucleophile.

The protein belongs to the MsrB Met sulfoxide reductase family. It depends on Zn(2+) as a cofactor.

The catalysed reaction is L-methionyl-[protein] + [thioredoxin]-disulfide + H2O = L-methionyl-(R)-S-oxide-[protein] + [thioredoxin]-dithiol. The sequence is that of Peptide methionine sulfoxide reductase MsrB from Alkalilimnicola ehrlichii (strain ATCC BAA-1101 / DSM 17681 / MLHE-1).